The following is an 89-amino-acid chain: Cornifin-A (89 aa).

The segment at 1–29 (MNSQQQKQPCTPPPQPQQQQVKQPCQPPP) is disordered. Tandem repeats lie at residues 3-14 (SQQQKQPCTPPP), 18-29 (QQQVKQPCQPPP), 31-38 (EPCIPKTK), 39-46 (EPCHPKVP), 47-54 (EPCHPKVP), 55-62 (EPCQPKVP), 63-70 (EPCQPKVP), and 71-78 (EPCPSTVT). The 2 X 12 AA approximate repeats stretch occupies residues 3 to 29 (SQQQKQPCTPPPQPQQQQVKQPCQPPP). Positions 31-78 (EPCIPKTKEPCHPKVPEPCHPKVPEPCQPKVPEPCQPKVPEPCPSTVT) are 6 X 8 AA approximate tandem repeats. The segment at 68–89 (KVPEPCPSTVTPAPAQQKTKQK) is disordered. Positions 75–89 (STVTPAPAQQKTKQK) are enriched in polar residues.

This sequence belongs to the cornifin (SPRR) family.

Its subcellular location is the cytoplasm. Cross-linked envelope protein of keratinocytes. It is a keratinocyte protein that first appears in the cell cytosol, but ultimately becomes cross-linked to membrane proteins by transglutaminase. All that results in the formation of an insoluble envelope beneath the plasma membrane. This chain is Cornifin-A (SPRR1A), found in Homo sapiens (Human).